The chain runs to 427 residues: Glucose-1-phosphate adenylyltransferase (427 aa).

Residues Y121, G186, 201-202 (EK), and S219 contribute to the alpha-D-glucose 1-phosphate site.

The protein belongs to the bacterial/plant glucose-1-phosphate adenylyltransferase family. Homotetramer.

It catalyses the reaction alpha-D-glucose 1-phosphate + ATP + H(+) = ADP-alpha-D-glucose + diphosphate. Its pathway is glycan biosynthesis; glycogen biosynthesis. Functionally, involved in the biosynthesis of ADP-glucose, a building block required for the elongation reactions to produce glycogen. Catalyzes the reaction between ATP and alpha-D-glucose 1-phosphate (G1P) to produce pyrophosphate and ADP-Glc. The polypeptide is Glucose-1-phosphate adenylyltransferase (Corynebacterium diphtheriae (strain ATCC 700971 / NCTC 13129 / Biotype gravis)).